The following is a 239-amino-acid chain: MRPSGRKTDQMRKVSFERNFSKHAEGSCLVRFGDTHVLCTASLEDKVPGWLRNGGKGWVTAEYGMLPRATGERMRREASAGKQSGRTQEIQRLIGRSLRAVVDLPALGERQISVDCDVIQADGGTRTASITGAWIALHDCLKWMEARNMVKLEKVLKDHVAAISCGIFASQPVVDLDYLEDSAAETDANFVMTGSGGLVEIQGTAEGKPFSEEEFASLMLLAKNGIAELIEMQKLAIAG.

Residues R86 and 124 to 126 (GTR) contribute to the phosphate site.

Belongs to the RNase PH family. Homohexameric ring arranged as a trimer of dimers.

The catalysed reaction is tRNA(n+1) + phosphate = tRNA(n) + a ribonucleoside 5'-diphosphate. Functionally, phosphorolytic 3'-5' exoribonuclease that plays an important role in tRNA 3'-end maturation. Removes nucleotide residues following the 3'-CCA terminus of tRNAs; can also add nucleotides to the ends of RNA molecules by using nucleoside diphosphates as substrates, but this may not be physiologically important. Probably plays a role in initiation of 16S rRNA degradation (leading to ribosome degradation) during starvation. The sequence is that of Ribonuclease PH from Sinorhizobium medicae (strain WSM419) (Ensifer medicae).